The following is a 223-amino-acid chain: Small ribosomal subunit protein uS3 (223 aa).

Residues 38 to 106 (LKAELKEKLK…EVYIDIQEVH (69 aa)) enclose the KH type-2 domain.

This sequence belongs to the universal ribosomal protein uS3 family. Part of the 30S ribosomal subunit. Forms a tight complex with proteins S10 and S14.

Its function is as follows. Binds the lower part of the 30S subunit head. Binds mRNA in the 70S ribosome, positioning it for translation. The protein is Small ribosomal subunit protein uS3 of Koribacter versatilis (strain Ellin345).